A 282-amino-acid chain; its full sequence is Pantothenate synthetase (282 aa).

30-37 (MGYLHEGH) is a binding site for ATP. H37 serves as the catalytic Proton donor. (R)-pantoate is bound at residue Q61. Q61 serves as a coordination point for beta-alanine. 147-150 (GMKD) provides a ligand contact to ATP. Q153 contacts (R)-pantoate. ATP is bound by residues V176 and 184–187 (KSSR).

It belongs to the pantothenate synthetase family. Homodimer.

The protein localises to the cytoplasm. The catalysed reaction is (R)-pantoate + beta-alanine + ATP = (R)-pantothenate + AMP + diphosphate + H(+). The protein operates within cofactor biosynthesis; (R)-pantothenate biosynthesis; (R)-pantothenate from (R)-pantoate and beta-alanine: step 1/1. Its function is as follows. Catalyzes the condensation of pantoate with beta-alanine in an ATP-dependent reaction via a pantoyl-adenylate intermediate. The sequence is that of Pantothenate synthetase from Bacillus cereus (strain ATCC 14579 / DSM 31 / CCUG 7414 / JCM 2152 / NBRC 15305 / NCIMB 9373 / NCTC 2599 / NRRL B-3711).